We begin with the raw amino-acid sequence, 780 residues long: LPS-assembly protein LptD (780 aa).

The signal sequence occupies residues 1–24 (MKKRLPTLLASLIGSALYSQQALA).

The protein belongs to the LptD family. As to quaternary structure, component of the lipopolysaccharide transport and assembly complex. Interacts with LptE and LptA.

Its subcellular location is the cell outer membrane. Its function is as follows. Together with LptE, is involved in the assembly of lipopolysaccharide (LPS) at the surface of the outer membrane. This Sodalis glossinidius (strain morsitans) protein is LPS-assembly protein LptD.